A 241-amino-acid chain; its full sequence is UDP-2,3-diacylglucosamine hydrolase (241 aa).

The Mn(2+) site is built by D8, H10, D41, N79, and H114. A substrate-binding site is contributed by 79 to 80 (NR). The substrate site is built by D122, S160, N164, K167, and H195. Mn(2+) contacts are provided by H195 and H197.

It belongs to the LpxH family. Mn(2+) is required as a cofactor.

The protein localises to the cell inner membrane. It catalyses the reaction UDP-2-N,3-O-bis[(3R)-3-hydroxytetradecanoyl]-alpha-D-glucosamine + H2O = 2-N,3-O-bis[(3R)-3-hydroxytetradecanoyl]-alpha-D-glucosaminyl 1-phosphate + UMP + 2 H(+). The protein operates within glycolipid biosynthesis; lipid IV(A) biosynthesis; lipid IV(A) from (3R)-3-hydroxytetradecanoyl-[acyl-carrier-protein] and UDP-N-acetyl-alpha-D-glucosamine: step 4/6. Functionally, hydrolyzes the pyrophosphate bond of UDP-2,3-diacylglucosamine to yield 2,3-diacylglucosamine 1-phosphate (lipid X) and UMP by catalyzing the attack of water at the alpha-P atom. Involved in the biosynthesis of lipid A, a phosphorylated glycolipid that anchors the lipopolysaccharide to the outer membrane of the cell. This chain is UDP-2,3-diacylglucosamine hydrolase, found in Aeromonas hydrophila subsp. hydrophila (strain ATCC 7966 / DSM 30187 / BCRC 13018 / CCUG 14551 / JCM 1027 / KCTC 2358 / NCIMB 9240 / NCTC 8049).